The primary structure comprises 341 residues: MKKYKAGIINVTGYAGLELARILASHPSVELCSVTGRSLAGKKLSDAFPYLHSLDLPITESLEGEVDIAFMALPHKEGASLVPDLLSKGMRVIDISADFRLKDPPLYQAWYGFEHPCPELLAEAVYGLPELKRKDIASARLVANPGCYPTSAILGLAPAFKMDLIEPNAIVDAKSGLSGSGRTPTAKNIFCEASEDVCAYSIGTHRHQPEIVQELSLVGGGVIPRVTFCPHLVPMSRGILSSAYARLKQPVTDEEVKEIYRRFYKDEPFVKITAEPPHTRYTRGTNMCFIYPVVDALNERLIVISCIDNLVKGAAGQAVQNMNIMLGLSEDTGLKAIAALP.

Residue Cys-147 is part of the active site.

This sequence belongs to the NAGSA dehydrogenase family. Type 1 subfamily.

It is found in the cytoplasm. It catalyses the reaction N-acetyl-L-glutamate 5-semialdehyde + phosphate + NADP(+) = N-acetyl-L-glutamyl 5-phosphate + NADPH + H(+). The protein operates within amino-acid biosynthesis; L-arginine biosynthesis; N(2)-acetyl-L-ornithine from L-glutamate: step 3/4. Catalyzes the NADPH-dependent reduction of N-acetyl-5-glutamyl phosphate to yield N-acetyl-L-glutamate 5-semialdehyde. This Dehalococcoides mccartyi (strain ATCC BAA-2266 / KCTC 15142 / 195) (Dehalococcoides ethenogenes (strain 195)) protein is N-acetyl-gamma-glutamyl-phosphate reductase.